The sequence spans 335 residues: Capsular polysaccharide phosphotransferase WcwK (335 aa).

It belongs to the stealth family.

This Streptococcus pneumoniae protein is Capsular polysaccharide phosphotransferase WcwK (wcwK).